We begin with the raw amino-acid sequence, 313 residues long: E3 ubiquitin-protein ligase SINA-like 2 (313 aa).

The interval 1 to 26 (MSGEASTSRRKRQRVPSSVESVENGG) is disordered. The RING-type zinc finger occupies 44 to 80 (CPICCHALTSPIFQCDNGHIACSSCCTKLRNKCPSCA). Positions 94–277 (VVEAVMVTCP…LKMEICIRKL (184 aa)) are SBD. Residues 97 to 155 (AVMVTCPNVKHGCTEKFSYGKELIHEKDCRFALCYCPAPNCNYSGVYKDLYSHFYVNHY) form an SIAH-type zinc finger. Residues Cys102, Cys109, His121, Cys125, Cys132, Cys137, His149, and His154 each contribute to the Zn(2+) site. The interval 278–313 (KKDEEEADEDEESEEEEDDDDDDDDDDEEEDADEEE) is disordered. Residues 282-313 (EEADEDEESEEEEDDDDDDDDDDEEEDADEEE) show a composition bias toward acidic residues.

The protein belongs to the SINA (Seven in absentia) family.

It carries out the reaction S-ubiquitinyl-[E2 ubiquitin-conjugating enzyme]-L-cysteine + [acceptor protein]-L-lysine = [E2 ubiquitin-conjugating enzyme]-L-cysteine + N(6)-ubiquitinyl-[acceptor protein]-L-lysine.. Its pathway is protein modification; protein ubiquitination. E3 ubiquitin-protein ligase that mediates ubiquitination and subsequent proteasomal degradation of target proteins. E3 ubiquitin ligases accept ubiquitin from an E2 ubiquitin-conjugating enzyme in the form of a thioester and then directly transfers the ubiquitin to targeted substrates. It probably triggers the ubiquitin-mediated degradation of different substrates. The protein is E3 ubiquitin-protein ligase SINA-like 2 of Arabidopsis thaliana (Mouse-ear cress).